The primary structure comprises 396 residues: Mannonate dehydratase (396 aa).

Belongs to the mannonate dehydratase family. It depends on Fe(2+) as a cofactor. Mn(2+) is required as a cofactor.

The catalysed reaction is D-mannonate = 2-dehydro-3-deoxy-D-gluconate + H2O. It participates in carbohydrate metabolism; pentose and glucuronate interconversion. Catalyzes the dehydration of D-mannonate. In Serratia proteamaculans (strain 568), this protein is Mannonate dehydratase.